Consider the following 128-residue polypeptide: Large ribosomal subunit protein bL17 (128 aa).

Belongs to the bacterial ribosomal protein bL17 family. As to quaternary structure, part of the 50S ribosomal subunit. Contacts protein L32.

The sequence is that of Large ribosomal subunit protein bL17 from Erwinia tasmaniensis (strain DSM 17950 / CFBP 7177 / CIP 109463 / NCPPB 4357 / Et1/99).